A 536-amino-acid chain; its full sequence is Protein ST7 homolog (536 aa).

Helical transmembrane passes span 3 to 23 and 49 to 69; these read CSWT…LFAL and FYVA…IFEW. Residues 191–218 adopt a coiled-coil conformation; it reads LAEEESETVSQAENLLRRALRAIESTLN. The helical transmembrane segment at 465–485 threads the bilayer; sequence TLMMLLQTFICLAICILAVLA.

Belongs to the ST7 family.

It localises to the membrane. The chain is Protein ST7 homolog from Caenorhabditis elegans.